We begin with the raw amino-acid sequence, 165 residues long: SsrA-binding protein (165 aa).

Residues 1–10 (MSKKGKKKSK) are compositionally biased toward basic residues. The tract at residues 1–21 (MSKKGKKKSKNNSSVDGNRRL) is disordered.

It belongs to the SmpB family.

It is found in the cytoplasm. Required for rescue of stalled ribosomes mediated by trans-translation. Binds to transfer-messenger RNA (tmRNA), required for stable association of tmRNA with ribosomes. tmRNA and SmpB together mimic tRNA shape, replacing the anticodon stem-loop with SmpB. tmRNA is encoded by the ssrA gene; the 2 termini fold to resemble tRNA(Ala) and it encodes a 'tag peptide', a short internal open reading frame. During trans-translation Ala-aminoacylated tmRNA acts like a tRNA, entering the A-site of stalled ribosomes, displacing the stalled mRNA. The ribosome then switches to translate the ORF on the tmRNA; the nascent peptide is terminated with the 'tag peptide' encoded by the tmRNA and targeted for degradation. The ribosome is freed to recommence translation, which seems to be the essential function of trans-translation. The polypeptide is SsrA-binding protein (Prochlorococcus marinus (strain NATL1A)).